Reading from the N-terminus, the 290-residue chain is Pre-mRNA-splicing factor cwf20 (290 aa).

2 disordered regions span residues Met-1–Phe-61 and Pro-114–Thr-134. A compositionally biased stretch (polar residues) spans Pro-114–Glu-128.

Belongs to the 40S cdc5-associated complex (or cwf complex), a spliceosome sub-complex reminiscent of a late-stage spliceosome composed of the U2, U5 and U6 snRNAs and at least brr2, cdc5, cwf2/prp3, cwf3/syf1, cwf4/syf3, cwf5/ecm2, spp42/cwf6, cwf7/spf27, cwf8, cwf9, cwf10, cwf11, cwf12, prp45/cwf13, cwf14, cwf15, cwf16, cwf17, cwf18, cwf19, cwf20, cwf21, cwf22, cwf23, cwf24, cwf25, cwf26, cyp7/cwf27, cwf28, cwf29/ist3, lea1, msl1, prp5/cwf1, prp10, prp12/sap130, prp17, prp22, sap61, sap62, sap114, sap145, slu7, smb1, smd1, smd3, smf1, smg1 and syf2.

It localises to the nucleus. Its function is as follows. Involved in mRNA splicing where it associates with cdc5 and the other cwf proteins as part of the spliceosome. This chain is Pre-mRNA-splicing factor cwf20 (cwf20), found in Schizosaccharomyces pombe (strain 972 / ATCC 24843) (Fission yeast).